The primary structure comprises 327 residues: Polyprenyl transferase esdpC (327 aa).

8 helical membrane passes run 35 to 54 (YNPL…AGAS), 73 to 93 (LLVF…NDWI), 118 to 138 (EALI…AYTL), 140 to 160 (GHNV…YPFG), 171 to 191 (YPQY…WLAI), 202 to 222 (IMES…LNTA), 239 to 259 (VYFL…ALVL), and 307 to 327 (ENFA…LLKS).

Belongs to the UbiA prenyltransferase family. Mg(2+) is required as a cofactor.

The protein resides in the membrane. The protein operates within secondary metabolite biosynthesis; terpenoid biosynthesis. Olyprenyl transferase; part of the cluster that mediates the biosynthesis of shearones, diterpenoid pyrones (DPs) which are structurally diverse meroterpenoids consisting of a diterpene linked by a pyrone, and which may exhibit a range of bioactivities. Within the pathway, esdpC takes part to the biosynthesis of the molecular scaffold by catalyzing the C-3 geranylgeranylation reaction of the alpha-pyrone produced by esdpA. The molecular scaffold is commonly biosynthesized by a series of enzymes including the non-reducing polyketide synthase (NR-PKS) esdpA that generates an alpha-pyrone; the prenyltransferase esdpC that attaches a geranylgeranyl pyrophosphate (GGPP) produced by the GGPP synthase (GGPPS) esdpD onto the pyrone unit; the FAD-dependent monooxygenase esdpE that converts an olefin on the diterpene unit into an epoxide; and the terpene cyclase esdpB that catalyzes the cyclization reactions to give the molecular backbone shearone A. In the modification steps, esdpF oxidizes the hydroxy group to a ketone at C-3 and esdpG then attaches hydroxy groups at both C-11 and C-12. After that, esdpI hydroxylates at C-20 and esdpH hydroxylates at C-6'. The ether bridge is generated by nucleophilic attack of the hydroxy group at C-20 to the carbonyl carbon at C-3. EsdpH can also functions prior to esdpI. The different combinations of these modification enzymes lead to the production of diverse shearone derivatives, shearone I being the end product of the pathway. The alpha-ketoglutarate-dependent dioxygenase esdpJ seems not to be involved in this pathway. The sequence is that of Polyprenyl transferase esdpC from Penicillium shearii (Eupenicillium shearii).